A 404-amino-acid chain; its full sequence is Major outer membrane porin (404 aa).

An N-terminal signal peptide occupies residues 1-22 (MKKLLKSVLAFAVLGSASSLHA). Positions 85-110 (GPVPTTTDTDAAADITTSTPRENPAY) are disordered. Over residues 89-103 (TTTDTDAAADITTST) the composition is skewed to low complexity.

The protein belongs to the chlamydial porin (CP) (TC 1.B.2) family. In terms of assembly, part of a disulfide cross-linked outer membrane complex (COMC) composed of the major outer membrane porin (MOMP), the small cysteine-rich protein (OmcA) and the large cysteine-rich periplasmic protein (OmcB).

Its subcellular location is the cell outer membrane. Its function is as follows. In elementary bodies (EBs, the infectious stage, which is able to survive outside the host cell) provides the structural integrity of the outer envelope through disulfide cross-links with the small cysteine-rich protein and the large cysteine-rich periplasmic protein. It has been described in publications as the Sarkosyl-insoluble COMC (Chlamydia outer membrane complex), and serves as the functional equivalent of peptidoglycan. Functionally, permits diffusion of specific solutes through the outer membrane. This is Major outer membrane porin (ompA) from Chlamydia muridarum.